The chain runs to 76 residues: Tautomerase PptA (76 aa).

Pro-2 (proton acceptor; via imino nitrogen) is an active-site residue.

The protein belongs to the 4-oxalocrotonate tautomerase family. PptA subfamily. In terms of assembly, homodimer.

Its subcellular location is the cytoplasm. The sequence is that of Tautomerase PptA from Cronobacter sakazakii (strain ATCC BAA-894) (Enterobacter sakazakii).